We begin with the raw amino-acid sequence, 785 residues long: Endonuclease MutS2 (785 aa).

Position 332–339 (332–339) interacts with ATP; sequence GPNTGGKT. In terms of domain architecture, Smr spans 710–785; sequence IDLRGLDAEE…GDGATIVELK (76 aa).

It belongs to the DNA mismatch repair MutS family. MutS2 subfamily. In terms of assembly, homodimer. Binds to stalled ribosomes, contacting rRNA.

In terms of biological role, endonuclease that is involved in the suppression of homologous recombination and thus may have a key role in the control of bacterial genetic diversity. Acts as a ribosome collision sensor, splitting the ribosome into its 2 subunits. Detects stalled/collided 70S ribosomes which it binds and splits by an ATP-hydrolysis driven conformational change. Acts upstream of the ribosome quality control system (RQC), a ribosome-associated complex that mediates the extraction of incompletely synthesized nascent chains from stalled ribosomes and their subsequent degradation. Probably generates substrates for RQC. The sequence is that of Endonuclease MutS2 from Clostridium botulinum (strain Alaska E43 / Type E3).